The following is an 83-amino-acid chain: Cell division topological specificity factor (83 aa).

Belongs to the MinE family.

Functionally, prevents the cell division inhibition by proteins MinC and MinD at internal division sites while permitting inhibition at polar sites. This ensures cell division at the proper site by restricting the formation of a division septum at the midpoint of the long axis of the cell. The polypeptide is Cell division topological specificity factor (Buchnera aphidicola subsp. Schizaphis graminum (strain Sg)).